Here is a 574-residue protein sequence, read N- to C-terminus: M-phase inducer phosphatase 2 (574 aa).

Disordered stretches follow at residues 31-51 and 90-110; these read GFGF…SSSP and RRTS…AGLC. S42 is modified (phosphoserine). Residues 90–105 show a composition bias toward low complexity; sequence RRTSECSLSSESSESS. Position 166 is a phosphoserine; by MELK (S166). S246 is subject to Phosphoserine. S319 carries the post-translational modification Phosphoserine; by MAPKAPK2 and MELK. Residue S319 is modified to Phosphoserine; by MELK and MAPK14. Residues 339–359 form a disordered region; it reads DVPVLSKRRKSGTPLEEQQLE. S349 is subject to Phosphoserine; by AURKA. S370 carries the post-translational modification Phosphoserine; by BRSK1 and MAPK14. The region spanning 425–532 is the Rhodanese domain; sequence IVEKFVIVDC…FFPQHPNFCE (108 aa). The active site involves C481. S557 carries the phosphoserine modification.

This sequence belongs to the MPI phosphatase family. In terms of assembly, interacts with MAPK14 and 14-3-3 proteins. Post-translationally, phosphorylated by BRSK1 in vitro. Phosphorylated by CHEK1, which inhibits the activity of this protein. Phosphorylation at Ser-349 by AURKA might locally participate in the control of the onset of mitosis. Phosphorylation by MELK at Ser-166 promotes localization to the centrosome and the spindle poles during mitosis. Phosphorylation at Ser-319 and Ser-370 by MAPK14 is required for binding to 14-3-3 proteins.

It is found in the cytoplasm. The protein resides in the cytoskeleton. The protein localises to the microtubule organizing center. Its subcellular location is the centrosome. It localises to the spindle pole. It carries out the reaction O-phospho-L-tyrosyl-[protein] + H2O = L-tyrosyl-[protein] + phosphate. Its activity is regulated as follows. Stimulated by B-type cyclins. Its function is as follows. Tyrosine protein phosphatase which functions as a dosage-dependent inducer of mitotic progression. Directly dephosphorylates CDK1 and stimulates its kinase activity. Required for G2/M phases of the cell cycle progression and abscission during cytokinesis in a ECT2-dependent manner. The three isoforms seem to have a different level of activity. This Rattus norvegicus (Rat) protein is M-phase inducer phosphatase 2 (Cdc25b).